Reading from the N-terminus, the 186-residue chain is Ribosome-recycling factor (186 aa).

It belongs to the RRF family.

It is found in the cytoplasm. Functionally, responsible for the release of ribosomes from messenger RNA at the termination of protein biosynthesis. May increase the efficiency of translation by recycling ribosomes from one round of translation to another. This Herminiimonas arsenicoxydans protein is Ribosome-recycling factor.